We begin with the raw amino-acid sequence, 69 residues long: uncharacterized protein (69 aa).

This is an uncharacterized protein from Bacillus anthracis.